The chain runs to 336 residues: Fructose-1,6-bisphosphatase class 1 (336 aa).

Positions 90, 112, 114, and 115 each coordinate Mg(2+). Substrate contacts are provided by residues Asp115–Ser118, Asn211, and Lys277. Glu283 provides a ligand contact to Mg(2+).

This sequence belongs to the FBPase class 1 family. Homotetramer. Requires Mg(2+) as cofactor.

It is found in the cytoplasm. It catalyses the reaction beta-D-fructose 1,6-bisphosphate + H2O = beta-D-fructose 6-phosphate + phosphate. It functions in the pathway carbohydrate biosynthesis; gluconeogenesis. The chain is Fructose-1,6-bisphosphatase class 1 from Stutzerimonas stutzeri (strain A1501) (Pseudomonas stutzeri).